The following is a 393-amino-acid chain: S-adenosylmethionine synthase (393 aa).

His-16 contributes to the ATP binding site. Asp-18 is a binding site for Mg(2+). Residue Glu-44 coordinates K(+). Glu-57 and Gln-100 together coordinate L-methionine. Residues 100–110 (QSNDIAQGVDH) are flexible loop. ATP is bound by residues 167 to 169 (DAK), 238 to 239 (RF), Asp-247, 253 to 254 (RK), Ala-270, and Lys-274. Residue Asp-247 participates in L-methionine binding. Lys-278 serves as a coordination point for L-methionine.

Belongs to the AdoMet synthase family. Homotetramer; dimer of dimers. Mg(2+) is required as a cofactor. Requires K(+) as cofactor.

The protein resides in the cytoplasm. It catalyses the reaction L-methionine + ATP + H2O = S-adenosyl-L-methionine + phosphate + diphosphate. The protein operates within amino-acid biosynthesis; S-adenosyl-L-methionine biosynthesis; S-adenosyl-L-methionine from L-methionine: step 1/1. Catalyzes the formation of S-adenosylmethionine (AdoMet) from methionine and ATP. The overall synthetic reaction is composed of two sequential steps, AdoMet formation and the subsequent tripolyphosphate hydrolysis which occurs prior to release of AdoMet from the enzyme. In Leptothrix cholodnii (strain ATCC 51168 / LMG 8142 / SP-6) (Leptothrix discophora (strain SP-6)), this protein is S-adenosylmethionine synthase.